Reading from the N-terminus, the 315-residue chain is Prephenate dehydratase (315 aa).

In terms of domain architecture, Prephenate dehydratase spans 3–189 (RIAYLGPEGT…ARTRFLLIGV (187 aa)). The ACT domain occupies 203 to 280 (SVVLRIANVP…ADVRYLGSWP (78 aa)).

As to quaternary structure, homodimer.

It carries out the reaction prephenate + H(+) = 3-phenylpyruvate + CO2 + H2O. It participates in amino-acid biosynthesis; L-phenylalanine biosynthesis; phenylpyruvate from prephenate: step 1/1. This Mycobacterium marinum (strain ATCC BAA-535 / M) protein is Prephenate dehydratase (pheA).